We begin with the raw amino-acid sequence, 856 residues long: Inactive rhomboid protein 2 (856 aa).

Residues 1–115 (MASADKNGGS…PGFRRQASLS (115 aa)) are disordered. The Cytoplasmic portion of the chain corresponds to 1 to 409 (MASADKNGGS…HRPYFTYWLT (409 aa)). S90 bears the Phosphoserine mark. Over residues 94–106 (PRSRWQESSEKRP) the composition is skewed to basic and acidic residues. A phosphoserine mark is found at S113 and S117. Residues 165–184 (PSQEAPSFQGTESPKPCKMP) form a disordered region. The involved in interaction with FRMD8 stretch occupies residues 191–271 (ARGRAFRHPE…GQRCRVVKRS (81 aa)). 3 positions are modified to phosphoserine: S323, S325, and S328. The chain crosses the membrane as a helical span at residues 410–430 (FVHVIITLLVICTYGIAPVGF). Residues 431-660 (AQHVTTQLVL…PDQFYRLWLS (230 aa)) are Lumenal-facing. The segment at 531-553 (GPPMDKSDLGQKRTSGAVCHQDP) is disordered. The chain crosses the membrane as a helical span at residues 661–681 (LFLHAGVVHCLVSVVFQMTIL). Topologically, residues 682-692 (RDLEKLAGWHR) are cytoplasmic. The chain crosses the membrane as a helical span at residues 693-713 (IAIIFILSGITGNLASAIFLP). Residues 714–715 (YR) lie on the Lumenal side of the membrane. A helical membrane pass occupies residues 716 to 736 (AEVGPAGSQFGLLACLFVELF). Residues 737–747 (QSWPLLERPWK) are Cytoplasmic-facing. The helical transmembrane segment at 748–768 (AFLNLSAIVLFLFICGLLPWI) threads the bilayer. Topologically, residues 769 to 773 (DNIAH) are lumenal. Residues 774-794 (IFGFLSGLLLAFAFLPYITFG) traverse the membrane as a helical segment. The Cytoplasmic segment spans residues 795 to 802 (TSDKYRKR). Residues 803-823 (ALILVSLLAFAGLFAALVLWL) form a helical membrane-spanning segment. Residues 824 to 856 (YIYPINWPWIEHLTCFPFTSRFCEKYELDQVLH) lie on the Lumenal side of the membrane.

Belongs to the peptidase S54 family. Interacts with EGF. Interacts (via cytoplasmic N-terminus) with FRMD8/iTAP; this interaction leads to mutual protein stabilization. Interacts with ADAM17/TACE. Found in the epidermis and esophageal epithelium.

It localises to the endoplasmic reticulum membrane. The protein resides in the cell membrane. In terms of biological role, regulates ADAM17 protease, a sheddase of the epidermal growth factor (EGF) receptor ligands and TNF, thereby plays a role in sleep, cell survival, proliferation, migration and inflammation. Does not exhibit any protease activity on its own. The polypeptide is Inactive rhomboid protein 2 (RHBDF2) (Homo sapiens (Human)).